Here is a 141-residue protein sequence, read N- to C-terminus: Nucleoside diphosphate kinase (141 aa).

Residues Lys-11, Phe-59, Arg-87, Thr-93, Arg-104, and Asn-114 each contribute to the ATP site. The active-site Pros-phosphohistidine intermediate is the His-117.

The protein belongs to the NDK family. Homotetramer. Requires Mg(2+) as cofactor.

The protein localises to the cytoplasm. It carries out the reaction a 2'-deoxyribonucleoside 5'-diphosphate + ATP = a 2'-deoxyribonucleoside 5'-triphosphate + ADP. The catalysed reaction is a ribonucleoside 5'-diphosphate + ATP = a ribonucleoside 5'-triphosphate + ADP. Functionally, major role in the synthesis of nucleoside triphosphates other than ATP. The ATP gamma phosphate is transferred to the NDP beta phosphate via a ping-pong mechanism, using a phosphorylated active-site intermediate. This Verminephrobacter eiseniae (strain EF01-2) protein is Nucleoside diphosphate kinase.